The sequence spans 436 residues: Glutamyl-tRNA(Gln) amidotransferase subunit D (436 aa).

Positions 91–420 constitute an Asparaginase/glutaminase domain; that stretch reads QNISIISTGG…GEVAKLMNKN (330 aa). Active-site residues include Thr101, Thr177, Asp178, and Lys254.

The protein belongs to the asparaginase 1 family. GatD subfamily. Heterodimer of GatD and GatE.

It catalyses the reaction L-glutamyl-tRNA(Gln) + L-glutamine + ATP + H2O = L-glutaminyl-tRNA(Gln) + L-glutamate + ADP + phosphate + H(+). In terms of biological role, allows the formation of correctly charged Gln-tRNA(Gln) through the transamidation of misacylated Glu-tRNA(Gln) in organisms which lack glutaminyl-tRNA synthetase. The reaction takes place in the presence of glutamine and ATP through an activated gamma-phospho-Glu-tRNA(Gln). The GatDE system is specific for glutamate and does not act on aspartate. This Methanobrevibacter smithii (strain ATCC 35061 / DSM 861 / OCM 144 / PS) protein is Glutamyl-tRNA(Gln) amidotransferase subunit D.